Here is a 215-residue protein sequence, read N- to C-terminus: Chaperone protein TorD (215 aa).

Belongs to the TorD/DmsD family. TorD subfamily.

The protein resides in the cytoplasm. Involved in the biogenesis of TorA. Acts on TorA before the insertion of the molybdenum cofactor and, as a result, probably favors a conformation of the apoenzyme that is competent for acquiring the cofactor. The protein is Chaperone protein TorD of Vibrio atlanticus (strain LGP32) (Vibrio splendidus (strain Mel32)).